A 1253-amino-acid polypeptide reads, in one-letter code: MTTHVTLEDALSNVDLLEELPLPDQQPCIEPPPSSIMYQANFDTNFEDRNAFVTGIARYIEQATVHSSMNEMLEEGQEYAVMLYTWRSCSRAIPQVKCNEQPNRVEIYEKTVEVLEPEVTKLMKFMYFQRKAIERFCNEVKRLCHTERRKDFVSEAYLLTLGKFINMFAVLDELKNMKCSVKNDHSAYKRAAQFLRKMADPQSIQESQNLSMFLANHNRITQCLHQQLEVIPGYEELLADIVNICVDYYENKMYLTPSEKHMLLKVMGFGLYLMDGNVSNIYKLDAKKRINLSKIDKFFKQLQVVPLFGDMQIELARYIETSAHYEENKSKWTCTQSSISPQYNICEQMVQIRDDHIRFISELARYSNSEVVTGSGLDSQKSDEEYRELFDLALRGLQLLSKWSAHVMEVYSWKLVHPTDKFCNKDCPGTAEEYERATRYNYTSEEKFAFVEVIAMVKGLQVLMGRMESVFNQAIRNTIYAALQDFAQSSLREPLRQAVRKKKNVLISVLQAIRKTVCDWEAGREPPNDPCLRGEKDPKGGFDINVPRRAVGPSSTQLYMVRTMLESLIADKSGSKKTLRSSLDGPIVQAIEEFHKQSFFFTHLLNFSEALQQCCDLSQLWFREFFLELTMGRRIQFPIEMSMPWILTDHILETKEPSMMEYVLYPLDLYNDSAYYALTKFKKQFLYDEIEAEVNLCFDQFVYKLSDQIFAYYKAMSGSVLLDKRFRAECKNYGVIIPYPPSNRYETLLKQRHVQLLGRSIDLNRLITQRISAAMYKSLDQAISRFESEDLTSIVELEWLLDINRLTHRLLSKHLTLDSFDAMFREANHNVSAPYGRNTLHVFWELNFDFLPNYCYNGSTNRFVRTAIPFTQEPQRDKPANVQPYYLYGSKPLNIAYSHIYSSYRNFVGPPHFKTICRLLGYQGIAVVMEELLKIVKSLLQGTVLQYVKTLIEVMPKICRLPRHEYGSPGILEFFHHQLKDIIEYAELKTDVFQSLREVGNAILFCLLIEQALSQEEVCDLLHAAPFQNILPRVYIKEGERLEVRMKRLEAKYAPLHLVPLIERLGTPQQIAIAREGDLLTKERLCCGLSMFEVILTRIRSYLQDPIWRGPPPTNGVMHVDECVELHRLWSAMQFVYCIPVGTNEFTAEQCFGDGLNWAGCAIIVLLGQQRRFDLFDFCYHLLKVQRQDGKDEIIKNVPLKKMADRIRKYQILNNEIFAVLNKYMKSVESDSSTVEHVRCFQPPIHQSLATTC.

This sequence belongs to the CYFIP family.

Its subcellular location is the cytoplasm. Its function is as follows. Involved in T-cell adhesion and p53-dependent induction of apoptosis. Does not bind RNA. The chain is Cytoplasmic FMR1-interacting protein 2 (cyfip2) from Xenopus laevis (African clawed frog).